We begin with the raw amino-acid sequence, 89 residues long: Microcin N (89 aa).

A signal peptide spans 1-15; the sequence is MRELDREELNCVGGA.

Belongs to the class IIa microcin family. In terms of processing, mass spectrometry suggests 3 of the 4 Met residues of the mature peptide are oxidized.

It localises to the secreted. Its function is as follows. Active against E.coli and Salmonella, but not Listeria or Campylobacter. Channel-forming microcin. Probably neutralized by its immunity protein McnI. In Escherichia coli, this protein is Microcin N.